A 732-amino-acid polypeptide reads, in one-letter code: Acylamino-acid-releasing enzyme (732 aa).

Met1 bears the N-acetylmethionine mark. Ser187 carries the post-translational modification Phosphoserine. Catalysis depends on charge relay system residues Ser587, Asp675, and His707.

This sequence belongs to the peptidase S9C family. In terms of assembly, homotetramer. In terms of tissue distribution, expressed in the liver (at protein level).

The protein localises to the cytoplasm. It carries out the reaction Cleavage of an N-acetyl or N-formyl amino acid from the N-terminus of a polypeptide.. Its activity is regulated as follows. Homotetramerization is required for activity. Tetramerization results in the formation of a gated channel which is involved in substrate selection and substrate access to the catalytic sites. Its function is as follows. This enzyme catalyzes the hydrolysis of the N-terminal peptide bond of an N-acetylated peptide to generate an N-acetylated amino acid and a peptide with a free N-terminus. It preferentially cleaves off Ac-Ala, Ac-Met and Ac-Ser. Also, involved in the degradation of oxidized and glycated proteins. This chain is Acylamino-acid-releasing enzyme (APEH), found in Sus scrofa (Pig).